A 519-amino-acid polypeptide reads, in one-letter code: Circadian clock oscillator protein KaiC 1 (519 aa).

2 consecutive KaiC domains span residues 1–248 (MNLP…INIF) and 262–519 (ARIS…KTAE). ATP contacts are provided by Gly50, Thr51, Gly52, Lys53, Thr54, Leu55, Ser90, Lys225, Leu226, Arg227, Thr229, His231, Thr241, Thr291, Gly292, Thr293, Gly294, Lys295, Thr296, and Leu297. Mg(2+) is bound at residue Thr54. Mg(2+) is bound at residue Thr296. Glu319 provides a ligand contact to Mg(2+). Residue Trp332 coordinates ATP. Ser432 carries the phosphoserine; by autocatalysis modification. Position 433 is a phosphothreonine; by autocatalysis (Thr433). Residues Arg452, Lys458, Met459, Arg460, Ser462, His464, and Lys466 each contribute to the ATP site.

This sequence belongs to the KaiC family. In terms of assembly, homohexamer; hexamerization is dependent on ATP-binding. Core component of the KaiABC complex, at least composed of a KaiC homohexamer, a KaiB dimer and two KaiA dimers. Interacts directly with SasA. Multimerizes, probably forming homohexamers, no interaction with KaiC2 or KaiC3 is seen. Interacts with KaiA. In another study interacts with itself, KaiB1, KaiB3 and KaiC3. Interacts with SasA (hik8). It depends on Mg(2+) as a cofactor. Post-translationally, phosphorylated on serine and threonine residues by autocatalysis. Has a 4 step phosphorylation cycle; the autokinase acts first on Thr-433, then Ser-432. When Ser-432 is modified KaiC switches to an autophosphatase mode, acting first on phospho-Thr-433 then phospho-Ser-432.

The catalysed reaction is L-seryl-[protein] + ATP = O-phospho-L-seryl-[protein] + ADP + H(+). It carries out the reaction L-threonyl-[protein] + ATP = O-phospho-L-threonyl-[protein] + ADP + H(+). The enzyme catalyses ATP + H2O = ADP + phosphate + H(+). Its activity is regulated as follows. The interaction with KaiA enhances its phosphorylation status, while the interaction with KaiB decreases it. Component of the oscillator and circadian clock in this organism, enhances fitness in a rhythmic environment. Autophosphorylates in the presence of KaiA, no activity is seen in its absence. Its function is as follows. Central component of the KaiABC oscillator complex, which constitutes the main circadian regulator in cyanobacteria. Complex composition changes during the circadian cycle to control KaiC phosphorylation. KaiA stimulates KaiC autophosphorylation, while KaiB sequesters KaiA, leading to KaiC autodephosphorylation. Clock output pathways impact the RpaA transcriptional regulator. KaiC enhances the autophosphorylation activity of SasA, which then transfers its phosphate group to RpaA to activate it. KaiB and KaiC together enhance the phospho-RpaA dephosphatase activity of CikA. In terms of biological role, has a weak, temperature-independent ATPase activity; ATPase activity defines the circadian period. The phosphorylation state of KaiC modulates its ATPase activity and effects KaiB binding. The polypeptide is Circadian clock oscillator protein KaiC 1 (Synechocystis sp. (strain ATCC 27184 / PCC 6803 / Kazusa)).